A 317-amino-acid chain; its full sequence is MNNWNSITIKISREAEETISALLIEAGSAGVEINDSADYLNHEDQFGEVLPEIEQSELVEITAYYPENMPIVELKAEIEHKIANLADYFSLTGLSVTTNNLSETNWAEAWKKYFEPARITHDLTIVPSWTKDYLATGSEKLIRLDPGMAFGTGTHPTTKMSLYALEQVLRGGETLLDVGTGSGVLSVAATYLGAAEIFAYDIDEVAVRVALENIELNPGHEKIHVSANNLLEGIDKKADVIVANILADILVLMTDDAFRLVKEEGYLIMSGIIADKADMVIASAENAGFFLETRMIQGEWNCLIFKKTENREGVIGG.

Positions 158, 179, 201, and 244 each coordinate S-adenosyl-L-methionine.

Belongs to the methyltransferase superfamily. PrmA family.

The protein resides in the cytoplasm. It carries out the reaction L-lysyl-[protein] + 3 S-adenosyl-L-methionine = N(6),N(6),N(6)-trimethyl-L-lysyl-[protein] + 3 S-adenosyl-L-homocysteine + 3 H(+). Methylates ribosomal protein L11. This chain is Ribosomal protein L11 methyltransferase, found in Lactococcus lactis subsp. cremoris (strain MG1363).